We begin with the raw amino-acid sequence, 296 residues long: Elongation factor Ts (296 aa).

The interval 82–85 (TDFV) is involved in Mg(2+) ion dislocation from EF-Tu.

It belongs to the EF-Ts family.

It is found in the cytoplasm. Its function is as follows. Associates with the EF-Tu.GDP complex and induces the exchange of GDP to GTP. It remains bound to the aminoacyl-tRNA.EF-Tu.GTP complex up to the GTP hydrolysis stage on the ribosome. The polypeptide is Elongation factor Ts (Coxiella burnetii (strain CbuG_Q212) (Coxiella burnetii (strain Q212))).